The primary structure comprises 129 residues: Large ribosomal subunit protein bL20 (129 aa).

The protein belongs to the bacterial ribosomal protein bL20 family.

Its function is as follows. Binds directly to 23S ribosomal RNA and is necessary for the in vitro assembly process of the 50S ribosomal subunit. It is not involved in the protein synthesizing functions of that subunit. In Rhodococcus jostii (strain RHA1), this protein is Large ribosomal subunit protein bL20.